The chain runs to 272 residues: Cytochrome b-c1 complex subunit Rieske-2, mitochondrial (272 aa).

A mitochondrion-targeting transit peptide spans methionine 1–phenylalanine 60. Over serine 61 to arginine 109 the chain is Mitochondrial matrix. The helical transmembrane segment at alanine 110 to leucine 132 threads the bilayer. Residues lysine 133–glycine 272 are Mitochondrial intermembrane-facing. One can recognise a Rieske domain in the interval isoleucine 182–leucine 270. The [2Fe-2S] cluster site is built by cysteine 215, histidine 217, cysteine 234, and histidine 237. The cysteines at positions 220 and 236 are disulfide-linked.

Belongs to the Rieske iron-sulfur protein family. As to quaternary structure, component of the ubiquinol-cytochrome c oxidoreductase (cytochrome b-c1 complex, complex III, CIII), a multisubunit enzyme composed of 3 respiratory subunits cytochrome b, cytochrome c1 and Rieske protein, 2 core protein subunits, and several low-molecular weight protein subunits. The complex exists as an obligatory dimer and forms supercomplexes (SCs) in the inner mitochondrial membrane with cytochrome c oxidase (complex IV, CIV). Requires [2Fe-2S] cluster as cofactor. As to expression, high levels are seen in the flowers while a low level expression is seen in the roots, leaves and stems.

The protein resides in the mitochondrion inner membrane. It carries out the reaction a quinol + 2 Fe(III)-[cytochrome c](out) = a quinone + 2 Fe(II)-[cytochrome c](out) + 2 H(+)(out). Its function is as follows. Component of the ubiquinol-cytochrome c oxidoreductase, a multisubunit transmembrane complex that is part of the mitochondrial electron transport chain which drives oxidative phosphorylation. The respiratory chain contains 3 multisubunit complexes succinate dehydrogenase (complex II, CII), ubiquinol-cytochrome c oxidoreductase (cytochrome b-c1 complex, complex III, CIII) and cytochrome c oxidase (complex IV, CIV), that cooperate to transfer electrons derived from NADH and succinate to molecular oxygen, creating an electrochemical gradient over the inner membrane that drives transmembrane transport and the ATP synthase. The cytochrome b-c1 complex catalyzes electron transfer from ubiquinol to cytochrome c, linking this redox reaction to translocation of protons across the mitochondrial inner membrane, with protons being carried across the membrane as hydrogens on the quinol. In the process called Q cycle, 2 protons are consumed from the matrix, 4 protons are released into the intermembrane space and 2 electrons are passed to cytochrome c. The Rieske protein is a catalytic core subunit containing a [2Fe-2S] iron-sulfur cluster. It cycles between 2 conformational states during catalysis to transfer electrons from the quinol bound in the Q(0) site in cytochrome b to cytochrome c1. This chain is Cytochrome b-c1 complex subunit Rieske-2, mitochondrial, found in Nicotiana tabacum (Common tobacco).